Here is a 936-residue protein sequence, read N- to C-terminus: E3 ubiquitin-protein ligase ZNRF3 (936 aa).

The tract at residues 1-31 is disordered; sequence MRPRSGGRPGATGRRRRRLRRRPRGLRCSRL. The N-terminal stretch at 1-55 is a signal peptide; the sequence is MRPRSGGRPGATGRRRRRLRRRPRGLRCSRLPPPPPLPLLLGLLLAAAGPGAARA. Over residues 13–27 the composition is skewed to basic residues; that stretch reads GRRRRRLRRRPRGLR. The Extracellular segment spans residues 56–219; it reads KETAFVEVVL…PRQPTEYFDM (164 aa). Residues 220 to 240 traverse the membrane as a helical segment; the sequence is GIFLAFFVVVSLVCLILLVKI. The Cytoplasmic portion of the chain corresponds to 241–936; that stretch reads KLKQRRSQNS…HSADSSSPGA (696 aa). The segment at 293–334 adopts an RING-type; atypical zinc-finger fold; the sequence is CAICLEKYIDGEELRVIPCTHRFHRKCVDPWLLQHHTCPHCR. Disordered stretches follow at residues 608-693, 739-758, 849-875, and 892-936; these read SEAG…SPGA, LYEG…SQGL, THSL…ATRE, and CPPE…SPGA. Residues 654-684 show a composition bias toward polar residues; it reads SGDQVSTCSLEMNYSSNSSLEHRGPNSSTSE. The segment covering 913-922 has biased composition (low complexity); the sequence is ESSTTATEAA.

The protein belongs to the ZNRF3 family. Interacts with LRP6, FZD4, FZD5, FZD6 and FZD8. Interacts with RSPO1; interaction promotes indirect interaction with LGR4 and membrane clearance of ZNRF3. Also interacts with RSPO2. Interacts with LMBR1L.

The protein localises to the cell membrane. It catalyses the reaction S-ubiquitinyl-[E2 ubiquitin-conjugating enzyme]-L-cysteine + [acceptor protein]-L-lysine = [E2 ubiquitin-conjugating enzyme]-L-cysteine + N(6)-ubiquitinyl-[acceptor protein]-L-lysine.. It functions in the pathway protein modification; protein ubiquitination. With respect to regulation, negatively regulated by R-spondin proteins such as RSPO1: interaction with RSPO1 induces the indirect association between ZNRF3 and LGR4, promoting membrane clearance of ZNRF3. In terms of biological role, E3 ubiquitin-protein ligase that acts as a negative regulator of the Wnt signaling pathway by mediating the ubiquitination and subsequent degradation of Wnt receptor complex components Frizzled and LRP6. Acts on both canonical and non-canonical Wnt signaling pathway. Acts as a tumor suppressor in the intestinal stem cell zone by inhibiting the Wnt signaling pathway, thereby restricting the size of the intestinal stem cell zone. Along with RSPO2 and RNF43, constitutes a master switch that governs limb specification. This Homo sapiens (Human) protein is E3 ubiquitin-protein ligase ZNRF3 (ZNRF3).